Here is an 81-residue protein sequence, read N- to C-terminus: MKTVFAILFLAFIALTYARSYEDVKEEIKNEVVKEILEDLEEESDELDDKSKEINDAKPYRWLRNKWWRRIRPDIRMAGKK.

An N-terminal signal peptide occupies residues 1–18 (MKTVFAILFLAFIALTYA). Positions 19–57 (RSYEDVKEEIKNEVVKEILEDLEEESDELDDKSKEINDA) are excised as a propeptide. Ala-78 carries the post-translational modification Alanine amide.

It belongs to the arminin family. As to expression, expressed in entodermal epithelium along the body column.

It is found in the secreted. The protein resides in the target cell membrane. In terms of biological role, antimicrobial peptide with a broad-spectrum antimicrobial activity. Keeps its antibacterial activity under a wide range of salt concentrations that mimic physiological conditions of human blood, which is surprising, since Hydra is an obligate freshwater animal with nearly no salt tolerance. Does not affect red blood cells. The sequence is that of Arminin 2a from Hydra vulgaris (Hydra).